A 447-amino-acid polypeptide reads, in one-letter code: tRNA modification GTPase MnmE (447 aa).

(6S)-5-formyl-5,6,7,8-tetrahydrofolate-binding residues include Arg24, Glu81, and Lys120. One can recognise a TrmE-type G domain in the interval 216–371; it reads GLNVAIAGKP…LRKELSNISG (156 aa). Asn226 provides a ligand contact to K(+). Residues 226 to 231, 245 to 251, and 270 to 273 contribute to the GTP site; these read NAGKSS, TDIAGTT, and DTAG. A Mg(2+)-binding site is contributed by Ser230. Residues Thr245, Ile247, and Thr250 each coordinate K(+). Thr251 is a binding site for Mg(2+). Lys447 is a (6S)-5-formyl-5,6,7,8-tetrahydrofolate binding site.

The protein belongs to the TRAFAC class TrmE-Era-EngA-EngB-Septin-like GTPase superfamily. TrmE GTPase family. As to quaternary structure, homodimer. Heterotetramer of two MnmE and two MnmG subunits. Requires K(+) as cofactor.

It is found in the cytoplasm. Exhibits a very high intrinsic GTPase hydrolysis rate. Involved in the addition of a carboxymethylaminomethyl (cmnm) group at the wobble position (U34) of certain tRNAs, forming tRNA-cmnm(5)s(2)U34. In Vesicomyosocius okutanii subsp. Calyptogena okutanii (strain HA), this protein is tRNA modification GTPase MnmE.